The following is a 387-amino-acid chain: Cytochrome b (387 aa).

4 helical membrane-spanning segments follow: residues Phe32–Met52, Trp76–Gly98, Thr113–Val133, and Phe179–Ile199. Residues His82 and His96 each contribute to the heme b site. His183 and His197 together coordinate heme b. A ubiquinone is bound at residue His202. 4 helical membrane passes run Phe226–Phe246, Leu290–Asp310, Leu322–Ala342, and Phe349–Pro369.

The protein belongs to the cytochrome b family. Fungal cytochrome b-c1 complex contains 10 subunits; 3 respiratory subunits, 2 core proteins and 5 low-molecular weight proteins. Cytochrome b-c1 complex is a homodimer. Heme b serves as cofactor.

The protein localises to the mitochondrion inner membrane. Functionally, component of the ubiquinol-cytochrome c reductase complex (complex III or cytochrome b-c1 complex) that is part of the mitochondrial respiratory chain. The b-c1 complex mediates electron transfer from ubiquinol to cytochrome c. Contributes to the generation of a proton gradient across the mitochondrial membrane that is then used for ATP synthesis. The protein is Cytochrome b (cob) of Emericella nidulans (Aspergillus nidulans).